Consider the following 432-residue polypeptide: 3-chlorobenzoate-3,4-dioxygenase oxygenase subunit (432 aa).

The Rieske domain occupies 27-133 (WIPALKSTEL…VKEMAGVVWV (107 aa)). The [2Fe-2S] cluster site is built by C69, H71, C88, and H91. Fe cation contacts are provided by H180 and H185.

It belongs to the bacterial ring-hydroxylating dioxygenase alpha subunit family. In terms of assembly, this dioxygenase system consists of two proteins: an oxygenase and an oxygenase reductase. Requires [2Fe-2S] cluster as cofactor. It depends on Fe cation as a cofactor.

This chain is 3-chlorobenzoate-3,4-dioxygenase oxygenase subunit (cbaA), found in Comamonas testosteroni (Pseudomonas testosteroni).